The primary structure comprises 307 residues: UDP-N-acetylenolpyruvoylglucosamine reductase (307 aa).

The region spanning 27 to 193 is the FAD-binding PCMH-type domain; sequence RVGGPADVVF…LDAVFEGLAD (167 aa). Arg-172 is a catalytic residue. Catalysis depends on Ser-222, which acts as the Proton donor. Residue Glu-299 is part of the active site.

The protein belongs to the MurB family. Requires FAD as cofactor.

Its subcellular location is the cytoplasm. It catalyses the reaction UDP-N-acetyl-alpha-D-muramate + NADP(+) = UDP-N-acetyl-3-O-(1-carboxyvinyl)-alpha-D-glucosamine + NADPH + H(+). The protein operates within cell wall biogenesis; peptidoglycan biosynthesis. Its function is as follows. Cell wall formation. The chain is UDP-N-acetylenolpyruvoylglucosamine reductase from Caulobacter sp. (strain K31).